The primary structure comprises 330 residues: UPF0324 membrane protein PG_2004 (330 aa).

9 consecutive transmembrane segments (helical) span residues 13–31 (IAYPAIIVFLILTLLGSLV), 36–58 (PFTSWLTPPVALLMGLAYALIFG), 71–93 (VLLQYSVVGLGFGMNLGESLASG), 97–114 (MMFTIISVFGTLLLGWFI), 126–148 (SALISAGTAICGGSAIAAVGPIL), 158–180 (ALGTVFLLNAVALFIFPSIGHWL), 248–270 (VPLFILFFIGAIILNTYLLEAYF), 285–307 (LTLSLFFIGASLTKEVIASVGVR), and 312–329 (GLFLWILISVGSLAFILL).

The protein belongs to the UPF0324 family.

Its subcellular location is the cell membrane. This Porphyromonas gingivalis (strain ATCC BAA-308 / W83) protein is UPF0324 membrane protein PG_2004.